The primary structure comprises 487 residues: Glucose starvation modulator protein 1 (487 aa).

The segment at 1 to 75 (MSIRFPEIPG…KRLTPQEKKA (75 aa)) is disordered. Positions 59 to 68 (SFSSSMTKRL) are enriched in polar residues. The segment at residues 83-111 (CVFCHSKHLQCSHSRPCQNCIKRNLAHEC) is a DNA-binding region (zn(2)-C6 fungal-type). The span at 122 to 139 (MSTTEVPAVSGESSSESG) shows a compositional bias: polar residues. Residues 122–158 (MSTTEVPAVSGESSSESGRATGENGSEMGNPPDPQIA) form a disordered region. In terms of domain architecture, PAS spans 348–420 (CLLDYENLSR…FRLFESVAVG (73 aa)).

The protein belongs to the ERT1/acuK family.

It is found in the nucleus. Functionally, transcription factor which regulates nonfermentable carbon utilization. This Clavispora lusitaniae (strain ATCC 42720) (Yeast) protein is Glucose starvation modulator protein 1 (GSM1).